Reading from the N-terminus, the 414-residue chain is Serine--tRNA ligase (414 aa).

An L-serine-binding site is contributed by 230-232 (TSE). 261–263 (RQE) contributes to the ATP binding site. Position 284 (glutamate 284) interacts with L-serine. 348-351 (EISS) provides a ligand contact to ATP. Serine 382 is a binding site for L-serine.

Belongs to the class-II aminoacyl-tRNA synthetase family. Type-1 seryl-tRNA synthetase subfamily. Homodimer. The tRNA molecule binds across the dimer.

The protein localises to the cytoplasm. The catalysed reaction is tRNA(Ser) + L-serine + ATP = L-seryl-tRNA(Ser) + AMP + diphosphate + H(+). It carries out the reaction tRNA(Sec) + L-serine + ATP = L-seryl-tRNA(Sec) + AMP + diphosphate + H(+). The protein operates within aminoacyl-tRNA biosynthesis; selenocysteinyl-tRNA(Sec) biosynthesis; L-seryl-tRNA(Sec) from L-serine and tRNA(Sec): step 1/1. Its function is as follows. Catalyzes the attachment of serine to tRNA(Ser). Is also able to aminoacylate tRNA(Sec) with serine, to form the misacylated tRNA L-seryl-tRNA(Sec), which will be further converted into selenocysteinyl-tRNA(Sec). The polypeptide is Serine--tRNA ligase (Campylobacter fetus subsp. fetus (strain 82-40)).